Consider the following 103-residue polypeptide: Toluene-4-monooxygenase system, effector component (103 aa).

Belongs to the TmoD/XamoD family. As to quaternary structure, the alkene monooxygenase multicomponent enzyme system is composed of an electron transfer component and a monooxygenase component interacting with the effector protein TmoD. The electron transfer component is composed of a ferredoxin reductase (TmoF) and a ferredoxin (TmoC), and the monooxygenase component is formed by a heterohexamer (dimer of heterotrimers) of two alpha subunits (TmoA), two beta subunits (TmoE) and two gamma subunits (TmoB).

It participates in xenobiotic degradation; toluene degradation. Functionally, effector component of the toluene-4-monooxygenase multicomponent enzyme system which catalyzes the O2- and NADH-dependent hydroxylation of toluene to form p-cresol. Required for optimal efficiency and specificity of the holoenzyme. This chain is Toluene-4-monooxygenase system, effector component, found in Ectopseudomonas mendocina (Pseudomonas mendocina).